Consider the following 426-residue polypeptide: Serine--tRNA ligase (426 aa).

Over residues 41–60 (QTRTEQLQAERNARSKSIGQ) the composition is skewed to polar residues. A disordered region spans residues 41–64 (QTRTEQLQAERNARSKSIGQAKQR). An L-serine-binding site is contributed by 233-235 (TAE). 264 to 266 (RSE) contacts ATP. Glu-287 serves as a coordination point for L-serine. Residue 351-354 (EISS) coordinates ATP. An L-serine-binding site is contributed by Ser-387.

This sequence belongs to the class-II aminoacyl-tRNA synthetase family. Type-1 seryl-tRNA synthetase subfamily. In terms of assembly, homodimer. The tRNA molecule binds across the dimer.

It is found in the cytoplasm. The enzyme catalyses tRNA(Ser) + L-serine + ATP = L-seryl-tRNA(Ser) + AMP + diphosphate + H(+). It carries out the reaction tRNA(Sec) + L-serine + ATP = L-seryl-tRNA(Sec) + AMP + diphosphate + H(+). It functions in the pathway aminoacyl-tRNA biosynthesis; selenocysteinyl-tRNA(Sec) biosynthesis; L-seryl-tRNA(Sec) from L-serine and tRNA(Sec): step 1/1. Catalyzes the attachment of serine to tRNA(Ser). Is also able to aminoacylate tRNA(Sec) with serine, to form the misacylated tRNA L-seryl-tRNA(Sec), which will be further converted into selenocysteinyl-tRNA(Sec). In Pseudomonas fluorescens (strain ATCC BAA-477 / NRRL B-23932 / Pf-5), this protein is Serine--tRNA ligase.